Reading from the N-terminus, the 244-residue chain is Thiol S-methyltransferase TMT1B (244 aa).

Residues 1-23 (MDALVLFLQLLVLLLTLPLHLLA) form the signal peptide.

It belongs to the methyltransferase superfamily.

It is found in the endoplasmic reticulum membrane. The protein resides in the lipid droplet. It localises to the microsome. The protein localises to the cytoplasm. Its subcellular location is the cytosol. It catalyses the reaction a thiol + S-adenosyl-L-methionine = a methyl thioether + S-adenosyl-L-homocysteine + H(+). In terms of biological role, thiol S-methyltransferase that catalyzes the transfer of a methyl group from S-adenosyl-L-methionine to alkyl and phenolic thiol-containing acceptor substrates. Together with TMT1B accounts for most of S-thiol methylation activity in the endoplasmic reticulum of hepatocytes. Selectively methylates S-centered nucleophiles from metabolites such as hydrogen sulfide and dithiothreitol. The sequence is that of Thiol S-methyltransferase TMT1B from Mus musculus (Mouse).